The chain runs to 282 residues: 4-diphosphocytidyl-2-C-methyl-D-erythritol kinase (282 aa).

Lys-11 is an active-site residue. 93–103 (LVSAGLAGGSA) is an ATP binding site. The active site involves Asp-133.

Belongs to the GHMP kinase family. IspE subfamily.

It carries out the reaction 4-CDP-2-C-methyl-D-erythritol + ATP = 4-CDP-2-C-methyl-D-erythritol 2-phosphate + ADP + H(+). It participates in isoprenoid biosynthesis; isopentenyl diphosphate biosynthesis via DXP pathway; isopentenyl diphosphate from 1-deoxy-D-xylulose 5-phosphate: step 3/6. Functionally, catalyzes the phosphorylation of the position 2 hydroxy group of 4-diphosphocytidyl-2C-methyl-D-erythritol. The protein is 4-diphosphocytidyl-2-C-methyl-D-erythritol kinase of Ehrlichia chaffeensis (strain ATCC CRL-10679 / Arkansas).